The chain runs to 1216 residues: ATP-dependent helicase/nuclease subunit A (1216 aa).

Positions 26-488 (QKKTAEQIEA…ILLKENFRSS (463 aa)) constitute a UvrD-like helicase ATP-binding domain. ATP is bound at residue 47–54 (ASAGSGKT). The region spanning 515–802 (KHQLVFANTK…ELMTIHKSKG (288 aa)) is the UvrD-like helicase C-terminal domain.

This sequence belongs to the helicase family. AddA subfamily. As to quaternary structure, heterodimer of AddA and AddB/RexB. Mg(2+) serves as cofactor.

The enzyme catalyses Couples ATP hydrolysis with the unwinding of duplex DNA by translocating in the 3'-5' direction.. The catalysed reaction is ATP + H2O = ADP + phosphate + H(+). Its function is as follows. The heterodimer acts as both an ATP-dependent DNA helicase and an ATP-dependent, dual-direction single-stranded exonuclease. Recognizes the chi site generating a DNA molecule suitable for the initiation of homologous recombination. The AddA nuclease domain is required for chi fragment generation; this subunit has the helicase and 3' -&gt; 5' nuclease activities. The polypeptide is ATP-dependent helicase/nuclease subunit A (Streptococcus pneumoniae (strain CGSP14)).